The following is a 334-amino-acid chain: Putative binding protein YtlA (334 aa).

The N-terminal stretch at 1-23 is a signal peptide; the sequence is MNRWLRLGFACVGSIFLMFALAA. Cys-24 carries the N-palmitoyl cysteine lipid modification. Cys-24 is lipidated: S-diacylglycerol cysteine.

The protein belongs to the bacterial solute-binding protein SsuA/TauA family.

It localises to the cell membrane. This is Putative binding protein YtlA (ytlA) from Bacillus subtilis (strain 168).